We begin with the raw amino-acid sequence, 102 residues long: Small ribosomal subunit protein uS14 (102 aa).

This sequence belongs to the universal ribosomal protein uS14 family. As to quaternary structure, part of the 30S ribosomal subunit. Contacts proteins S3 and S10.

Binds 16S rRNA, required for the assembly of 30S particles and may also be responsible for determining the conformation of the 16S rRNA at the A site. The protein is Small ribosomal subunit protein uS14 of Ehrlichia ruminantium (strain Gardel).